The sequence spans 217 residues: Glycosylphosphatidylinositol anchor biosynthesis protein 11 (217 aa).

The next 2 helical transmembrane spans lie at 45–65 (TWLTIPWHLIALVYIYVKVFN) and 68–88 (NTAELLACLVPLQILYTIFQF). N-linked (GlcNAc...) asparagine glycosylation occurs at Asn-102. Helical transmembrane passes span 107–127 (AISILACIVLSIPVVVIIILF), 134–154 (LLWETWLLALHCSFLAYPAVY), 169–189 (YFILIVVGCWISCVVIPLDWD), and 197–217 (IPIVIGAYLGAFVGFAYGAYL).

It belongs to the PIGF family.

It localises to the endoplasmic reticulum membrane. It functions in the pathway glycolipid biosynthesis; glycosylphosphatidylinositol-anchor biosynthesis. Functionally, acts in the GPI biosynthetic pathway between GlcNAc-PI synthesis and GPI transfer to protein. In Candida glabrata (strain ATCC 2001 / BCRC 20586 / JCM 3761 / NBRC 0622 / NRRL Y-65 / CBS 138) (Yeast), this protein is Glycosylphosphatidylinositol anchor biosynthesis protein 11 (GPI11).